The sequence spans 157 residues: SsrA-binding protein (157 aa).

A disordered region spans residues 130–157; that stretch reads KAEHDKRDTIKEREGKREVERVMKSRHR.

Belongs to the SmpB family.

It localises to the cytoplasm. Functionally, required for rescue of stalled ribosomes mediated by trans-translation. Binds to transfer-messenger RNA (tmRNA), required for stable association of tmRNA with ribosomes. tmRNA and SmpB together mimic tRNA shape, replacing the anticodon stem-loop with SmpB. tmRNA is encoded by the ssrA gene; the 2 termini fold to resemble tRNA(Ala) and it encodes a 'tag peptide', a short internal open reading frame. During trans-translation Ala-aminoacylated tmRNA acts like a tRNA, entering the A-site of stalled ribosomes, displacing the stalled mRNA. The ribosome then switches to translate the ORF on the tmRNA; the nascent peptide is terminated with the 'tag peptide' encoded by the tmRNA and targeted for degradation. The ribosome is freed to recommence translation, which seems to be the essential function of trans-translation. The chain is SsrA-binding protein from Acidovorax sp. (strain JS42).